Here is a 304-residue protein sequence, read N- to C-terminus: MDDQPINIVTDIKNAICKDDLDSFIILMENNPSINLFCEPDKQSIDFGGIIQPIEFCKNNDLIKMVNEVDDQLIDHYISTVLREEVIKNCSVKILKYLFDMGLPVDFGRNFSIRLCSTKYLGSNHYIKENPGQDTLSLLRLLIEYGVDVNAHNYLPLYSAVSSKNFDKVKLLVENGANVLRVANGNENSFYFKIDSIKYLLDNGVEIDMNLSRALFLSIKDNSIECIQFYLELGADINKISPMDIIGLIKLRNIVGIRLLIENGFDFTSLNKLAGNNNERIIDVLINEANVDISALLKILLEFW.

7 ANK repeats span residues 7-36 (NIVTDIKNAICKDDLDSFIILMENNPSINL), 77-107 (YISTVLREEVIKNCSVKILKYLFDMGLPVDF), 122-151 (GSNHYIKENPGQDTLSLLRLLIEYGVDVNA), 152-181 (HNYLPLYSAVSSKNFDKVKLLVENGANVLR), 183-209 (ANGNENSFYFKIDSIKYLLDNGVEIDM), 210-239 (NLSRALFLSIKDNSIECIQFYLELGADINK), and 265-293 (FDFTSLNKLAGNNNERIIDVLINEANVDI).

The protein is Putative ankyrin repeat protein R598 of Acanthamoeba polyphaga (Amoeba).